A 140-amino-acid polypeptide reads, in one-letter code: Ribosome-binding factor A (140 aa).

The disordered stretch occupies residues Lys-121–Ser-140.

Belongs to the RbfA family. As to quaternary structure, monomer. Binds 30S ribosomal subunits, but not 50S ribosomal subunits or 70S ribosomes.

The protein localises to the cytoplasm. Its function is as follows. One of several proteins that assist in the late maturation steps of the functional core of the 30S ribosomal subunit. Associates with free 30S ribosomal subunits (but not with 30S subunits that are part of 70S ribosomes or polysomes). Required for efficient processing of 16S rRNA. May interact with the 5'-terminal helix region of 16S rRNA. The chain is Ribosome-binding factor A from Psychrobacter sp. (strain PRwf-1).